Here is a 760-residue protein sequence, read N- to C-terminus: Catalase-peroxidase (760 aa).

The tract at residues 1-57 (MTDSQDNRTPESPQGVDRKAEGGCPVLHDGVTAQGSESENPAIDSPTPRTGGRPNSL) is disordered. Positions 129 to 251 (WHAAGTYRIH…LGAVQMGLIY (123 aa)) form a cross-link, tryptophyl-tyrosyl-methioninium (Trp-Tyr) (with M-277). The active-site Proton acceptor is the H130. A cross-link (tryptophyl-tyrosyl-methioninium (Tyr-Met) (with W-129)) is located at residues 251-277 (YVNPEGPNGNPDPLASARDIRETFARM). Residue H292 coordinates heme b.

Belongs to the peroxidase family. Peroxidase/catalase subfamily. In terms of assembly, homodimer or homotetramer. It depends on heme b as a cofactor. Formation of the three residue Trp-Tyr-Met cross-link is important for the catalase, but not the peroxidase activity of the enzyme.

It carries out the reaction H2O2 + AH2 = A + 2 H2O. It catalyses the reaction 2 H2O2 = O2 + 2 H2O. In terms of biological role, bifunctional enzyme with both catalase and broad-spectrum peroxidase activity. This Nocardioides sp. (strain ATCC BAA-499 / JS614) protein is Catalase-peroxidase.